The sequence spans 103 residues: Protein Rev (103 aa).

Ser5 bears the Phosphoserine; by host CK2 mark. Residues 17 to 25 form a homomultimerization region; the sequence is IIKILYQSN. 2 disordered regions span residues 24-49 and 82-103; these read SNPC…RRQA and IRDP…TKDN. A Nuclear localization signal and RNA-binding (RRE) motif is present at residues 33–49; the sequence is SRNARKNRRRRWRRRQA. The span at 35-48 shows a compositional bias: basic residues; sequence NARKNRRRRWRRRQ. Residues 72 to 83 carry the Nuclear export signal and binding to XPO1 motif; that stretch reads VDLPPLEQLNIR.

It belongs to the HIV-1 REV protein family. As to quaternary structure, homomultimer; when bound to the RRE. Multimeric assembly is essential for activity and may involve XPO1. Binds to human KPNB1, XPO1, TNPO1, RANBP5 and IPO7. Interacts with the viral Integrase. Interacts with human KHDRBS1. Interacts with human NAP1; this interaction decreases Rev multimerization and stimulates its activity. Interacts with human DEAD-box helicases DDX3 and DDX24; these interactions may serve for viral RNA export to the cytoplasm and packaging, respectively. Interacts with human PSIP1; this interaction may inhibit HIV-1 DNA integration by promoting dissociation of the Integrase-LEDGF/p75 complex. Asymmetrically arginine dimethylated at one site by host PRMT6. Methylation impairs the RNA-binding activity and export of viral RNA from the nucleus to the cytoplasm. Post-translationally, phosphorylated by protein kinase CK2. Presence of, and maybe binding to the N-terminus of the regulatory beta subunit of CK2 is necessary for CK2-mediated Rev's phosphorylation.

It is found in the host nucleus. The protein localises to the host nucleolus. Its subcellular location is the host cytoplasm. Escorts unspliced or incompletely spliced viral pre-mRNAs (late transcripts) out of the nucleus of infected cells. These pre-mRNAs carry a recognition sequence called Rev responsive element (RRE) located in the env gene, that is not present in fully spliced viral mRNAs (early transcripts). This function is essential since most viral proteins are translated from unspliced or partially spliced pre-mRNAs which cannot exit the nucleus by the pathway used by fully processed cellular mRNAs. Rev itself is translated from a fully spliced mRNA that readily exits the nucleus. Rev's nuclear localization signal (NLS) binds directly to KPNB1/Importin beta-1 without previous binding to KPNA1/Importin alpha-1. KPNB1 binds to the GDP bound form of RAN (Ran-GDP) and targets Rev to the nucleus. In the nucleus, the conversion from Ran-GDP to Ran-GTP dissociates Rev from KPNB1 and allows Rev's binding to the RRE in viral pre-mRNAs. Rev multimerization on the RRE via cooperative assembly exposes its nuclear export signal (NES) to the surface. Rev can then form a complex with XPO1/CRM1 and Ran-GTP, leading to nuclear export of the complex. Conversion from Ran-GTP to Ran-GDP mediates dissociation of the Rev/RRE/XPO1/RAN complex, so that Rev can return to the nucleus for a subsequent round of export. Beside KPNB1, also seems to interact with TNPO1/Transportin-1, RANBP5/IPO5 and IPO7/RANBP7 for nuclear import. The nucleoporin-like HRB/RIP is an essential cofactor that probably indirectly interacts with Rev to release HIV RNAs from the perinuclear region to the cytoplasm. This chain is Protein Rev, found in Human immunodeficiency virus type 1 group O (isolate MVP5180) (HIV-1).